The following is a 276-amino-acid chain: NAD(+)--dinitrogen-reductase ADP-D-ribosyltransferase (276 aa).

As to quaternary structure, monomer.

It carries out the reaction L-arginyl-[dinitrogen reductase] + NAD(+) = N(omega)-alpha-(ADP-D-ribosyl)-L-arginyl-[dinitrogen reductase] + nicotinamide + H(+). Functionally, involved in the regulation of the nitrogen fixation activity by the reversible ADP-ribosylation of the dinitrogenase reductase component of the nitrogenase enzyme complex. The ADP-ribosyltransferase (DraT) transfers the ADP-ribose group from NAD to dinitrogenase reductase. The ADP-ribose group is removed through the action of the ADP-ribosylglycohydrolase (DraG). In Rhodospirillum rubrum, this protein is NAD(+)--dinitrogen-reductase ADP-D-ribosyltransferase (draT).